A 773-amino-acid polypeptide reads, in one-letter code: Serine/threonine-protein kinase CBK1 (773 aa).

2 stretches are compositionally biased toward polar residues: residues 50–59 (LHDQYSSHME) and 178–217 (GNYN…SPQR). Disordered regions lie at residues 50-111 (LHDQ…GGNI) and 177-275 (NGNY…QQQQ). 2 stretches are compositionally biased toward low complexity: residues 218 to 256 (QPAQ…QQQP) and 265 to 275 (QQTQLQQQQQQ). Residues 370-686 (FHTVQVIGKG…ADEIKSHPFF (317 aa)) enclose the Protein kinase domain. Residues 376–384 (IGKGAFGEV) and Lys399 each bind ATP. The active-site Proton acceptor is Asp493. An AGC-kinase C-terminal domain is found at 687–771 (RGVDWNTIRQ…SRFDYLTRKN (85 aa)).

It belongs to the protein kinase superfamily. STE Ser/Thr protein kinase family. COT1 subfamily.

It catalyses the reaction L-seryl-[protein] + ATP = O-phospho-L-seryl-[protein] + ADP + H(+). The enzyme catalyses L-threonyl-[protein] + ATP = O-phospho-L-threonyl-[protein] + ADP + H(+). Functionally, protein kinase that seems to play a role in the regulation of cell morphogenesis and proliferation. This is Serine/threonine-protein kinase CBK1 (CBK1) from Candida glabrata (strain ATCC 2001 / BCRC 20586 / JCM 3761 / NBRC 0622 / NRRL Y-65 / CBS 138) (Yeast).